Consider the following 166-residue polypeptide: Large ribosomal subunit protein uL11 (166 aa).

The residue at position 67 (Arg67) is an N5-methylarginine.

It belongs to the universal ribosomal protein uL11 family.

This Encephalitozoon cuniculi (strain GB-M1) (Microsporidian parasite) protein is Large ribosomal subunit protein uL11 (RPL12).